A 436-amino-acid chain; its full sequence is 3-hydroxy-3-methylglutaryl-coenzyme A reductase (436 aa).

Active-site charge relay system residues include E99, K277, and D293. H390 acts as the Proton donor in catalysis.

The protein belongs to the HMG-CoA reductase family.

The catalysed reaction is (R)-mevalonate + 2 NADP(+) + CoA = (3S)-3-hydroxy-3-methylglutaryl-CoA + 2 NADPH + 2 H(+). Its pathway is metabolic intermediate biosynthesis; (R)-mevalonate biosynthesis; (R)-mevalonate from acetyl-CoA: step 3/3. Its function is as follows. Converts HMG-CoA to mevalonate. The chain is 3-hydroxy-3-methylglutaryl-coenzyme A reductase (hmgA) from Archaeoglobus fulgidus (strain ATCC 49558 / DSM 4304 / JCM 9628 / NBRC 100126 / VC-16).